Here is a 204-residue protein sequence, read N- to C-terminus: Putative AgrB-like protein (204 aa).

Helical transmembrane passes span 52–74 (YGIA…YLWL), 87–107 (LNCT…FQNI), 111–131 (NWIV…FAPA), and 156–176 (LILT…LIMV).

The protein belongs to the AgrB family.

Its subcellular location is the cell membrane. May be involved in the proteolytic processing of a quorum sensing system signal molecule precursor. The protein is Putative AgrB-like protein of Listeria monocytogenes serotype 4b (strain CLIP80459).